A 556-amino-acid chain; its full sequence is Formate--tetrahydrofolate ligase (556 aa).

ATP is bound at residue threonine 65–serine 72.

The protein belongs to the formate--tetrahydrofolate ligase family.

The catalysed reaction is (6S)-5,6,7,8-tetrahydrofolate + formate + ATP = (6R)-10-formyltetrahydrofolate + ADP + phosphate. Its pathway is one-carbon metabolism; tetrahydrofolate interconversion. This is Formate--tetrahydrofolate ligase from Streptococcus agalactiae serotype V (strain ATCC BAA-611 / 2603 V/R).